The primary structure comprises 236 residues: Probable transmembrane ascorbate ferrireductase 4 (236 aa).

Positions Phe-14–Ile-210 constitute a Cytochrome b561 domain. The next 3 membrane-spanning stretches (helical) occupy residues Leu-17–Gly-37, Thr-42–Ile-62, and Val-76–Phe-96. 3 residues coordinate heme b: His-44, His-77, and His-110. Helical transmembrane passes span Trp-112–Phe-132, Thr-144–Ala-164, and Val-191–Leu-211. A heme b-binding site is contributed by His-149.

In terms of assembly, homodimer. Heme b serves as cofactor.

It is found in the membrane. The enzyme catalyses Fe(3+)(out) + L-ascorbate(in) = monodehydro-L-ascorbate radical(in) + Fe(2+)(out) + H(+). Its function is as follows. Two-heme-containing cytochrome. May catalyze ascorbate-dependent trans-membrane ferric-chelate reduction. This chain is Probable transmembrane ascorbate ferrireductase 4 (CYB561D), found in Arabidopsis thaliana (Mouse-ear cress).